The primary structure comprises 44 residues: Photosystem I reaction center subunit IX (44 aa).

The helical transmembrane segment at 7-27 (YLSVAPVASTLWFVALAGLLI) threads the bilayer.

It belongs to the PsaJ family.

Its subcellular location is the plastid. The protein resides in the chloroplast thylakoid membrane. May help in the organization of the PsaE and PsaF subunits. The polypeptide is Photosystem I reaction center subunit IX (Cicer arietinum (Chickpea)).